We begin with the raw amino-acid sequence, 358 residues long: Reverse gyrase subunit A (358 aa).

The 351-residue stretch at 1–351 (MNATLRIRNR…KLYLELERVV (351 aa)) folds into the Topo IA-type catalytic domain. The O-(5'-phospho-DNA)-tyrosine intermediate role is filled by Tyr-78.

The protein belongs to the type IA topoisomerase family. In terms of assembly, heterodimer of an RgyrA and RgyrB subunit. The topoisomerase domain is shared between the two subunits. Requires Mg(2+) as cofactor.

It is found in the cytoplasm. Modifies the topological state of DNA by introducing positive supercoils in an ATP-dependent process; dATP also allows positive supercoiling. Increases the linking number in steps of +1. Only this subunit binds DNA, in isolation it does not hydrolyze ATP. Hydrolyzes ATP only in the presence of DNA. Transiently cleaves a single DNA strand and remains covalently bound to the 5' DNA end probably through a tyrosine residue. It changes linking number in steps of one, and nicks DNA preferentially at 5'-CNNN | 3'-sites with a strong preference for 4 pyrimidine residues. There are about 1000 heterodimers per cell. May be involved in rewinding the DNA strands in the regions of the chromosome that have opened up to allow transcription or replication. In terms of biological role, reverse gyrase activity is reconstituted after incubation at 80 degrees Celsius for 5 minutes, positive supercoiling requires ATP and Mg(2+). In the presence of ATP it binds and nicks substrate but does not make closed product. The sequence is that of Reverse gyrase subunit A from Methanopyrus kandleri (strain AV19 / DSM 6324 / JCM 9639 / NBRC 100938).